The primary structure comprises 404 residues: Glucose-1-phosphate adenylyltransferase (404 aa).

Alpha-D-glucose 1-phosphate contacts are provided by residues tyrosine 99, glycine 164, 179-180 (EK), and serine 197.

It belongs to the bacterial/plant glucose-1-phosphate adenylyltransferase family.

It catalyses the reaction alpha-D-glucose 1-phosphate + ATP + H(+) = ADP-alpha-D-glucose + diphosphate. It participates in capsule biogenesis; capsule polysaccharide biosynthesis. The protein operates within glycan biosynthesis; glycogen biosynthesis. In terms of biological role, involved in the biosynthesis of ADP-glucose, a building block, required in the biosynthesis of maltose-1-phosphate (M1P) and in the elongation reactions to produce linear alpha-1,4-glucans. Catalyzes the reaction between ATP and alpha-D-glucose 1-phosphate (G1P) to produce pyrophosphate and ADP-Glc. This chain is Glucose-1-phosphate adenylyltransferase, found in Mycobacterium marinum (strain ATCC BAA-535 / M).